The primary structure comprises 430 residues: WD repeat-containing protein jip5 (430 aa).

WD repeat units follow at residues 9–48 (PLSS…AAAE), 72–111 (RHKG…VTSK), 117–158 (TNTD…SFKS), 215–262 (DQEE…DQSE), 272–318 (AGGE…GVVE), and 323–360 (DDIE…EEEE). Over residues 356–374 (EEEEEEEEEEQEDIEDNDD) the composition is skewed to acidic residues. Residues 356-430 (EEEEEEEEEE…NGILKFKGME (75 aa)) are disordered. Over residues 382–397 (HALERDSDDSDARADS) the composition is skewed to basic and acidic residues. Positions 405-416 (RKKRKKKKKGKK) are enriched in basic residues.

It belongs to the WD repeat WDR55 family.

The protein localises to the nucleus. Its subcellular location is the nucleolus. This is WD repeat-containing protein jip5 (jip5) from Botryotinia fuckeliana (strain B05.10) (Noble rot fungus).